The chain runs to 351 residues: Fe-S cluster assembly protein DRE2 (351 aa).

The N-terminal SAM-like domain stretch occupies residues 1 to 151 (MATTGRVLLL…KPDIGAQQAI (151 aa)). 2 disordered regions span residues 93–118 (RNRENKPWGLSDGNGSNANSSRRYND) and 157–186 (RRRKEKEKTDTLASSANYSTNGTVGAPSSN). 2 stretches are compositionally biased toward polar residues: residues 105 to 114 (GNGSNANSSR) and 167 to 186 (TLASSANYSTNGTVGAPSSN). Positions 152 to 243 (PLKLSRRRKE…EDELLDEDDM (92 aa)) are linker. Positions 253, 264, 267, and 269 each coordinate [2Fe-2S] cluster. The fe-S binding site A stretch occupies residues 253–269 (CRPKPGKRRRACKDCSC). Positions 314, 317, 325, and 328 each coordinate [4Fe-4S] cluster. 2 consecutive short sequence motifs (cx2C motif) follow at residues 314 to 317 (CGNC) and 325 to 328 (CDGC). The segment at 314 to 328 (CGNCSLGDAFRCDGC) is fe-S binding site B.

Belongs to the anamorsin family. Monomer. Interacts with TAH18. Interacts with MIA40. It depends on [2Fe-2S] cluster as a cofactor. The cofactor is [4Fe-4S] cluster.

Its subcellular location is the cytoplasm. The protein localises to the mitochondrion intermembrane space. In terms of biological role, component of the cytosolic iron-sulfur (Fe-S) protein assembly (CIA) machinery required for the maturation of extramitochondrial Fe-S proteins. Part of an electron transfer chain functioning in an early step of cytosolic Fe-S biogenesis, facilitating the de novo assembly of a [4Fe-4S] cluster on the scaffold complex CFD1-NBP35. Electrons are transferred to DRE2 from NADPH via the FAD- and FMN-containing protein TAH18. TAH18-DRE2 are also required for the assembly of the diferric tyrosyl radical cofactor of ribonucleotide reductase (RNR), probably by providing electrons for reduction during radical cofactor maturation in the catalytic small subunit RNR2. The polypeptide is Fe-S cluster assembly protein DRE2 (Ajellomyces capsulatus (strain NAm1 / WU24) (Darling's disease fungus)).